A 479-amino-acid polypeptide reads, in one-letter code: UDP-N-acetylmuramoyl-L-alanyl-D-glutamate--2,6-diaminopimelate ligase (479 aa).

Ser-21 contributes to the UDP-N-acetyl-alpha-D-muramoyl-L-alanyl-D-glutamate binding site. Residue 98–104 (GTNGKSS) participates in ATP binding. UDP-N-acetyl-alpha-D-muramoyl-L-alanyl-D-glutamate is bound by residues 144 to 145 (TT), Ser-171, Gln-177, and Arg-179. Lys-211 is modified (N6-carboxylysine). Residues Arg-372, 396–399 (DNPR), Gly-446, and Glu-450 contribute to the meso-2,6-diaminopimelate site. The Meso-diaminopimelate recognition motif motif lies at 396 to 399 (DNPR).

It belongs to the MurCDEF family. MurE subfamily. Requires Mg(2+) as cofactor. Carboxylation is probably crucial for Mg(2+) binding and, consequently, for the gamma-phosphate positioning of ATP.

The protein resides in the cytoplasm. The enzyme catalyses UDP-N-acetyl-alpha-D-muramoyl-L-alanyl-D-glutamate + meso-2,6-diaminopimelate + ATP = UDP-N-acetyl-alpha-D-muramoyl-L-alanyl-gamma-D-glutamyl-meso-2,6-diaminopimelate + ADP + phosphate + H(+). The protein operates within cell wall biogenesis; peptidoglycan biosynthesis. Its function is as follows. Catalyzes the addition of meso-diaminopimelic acid to the nucleotide precursor UDP-N-acetylmuramoyl-L-alanyl-D-glutamate (UMAG) in the biosynthesis of bacterial cell-wall peptidoglycan. This is UDP-N-acetylmuramoyl-L-alanyl-D-glutamate--2,6-diaminopimelate ligase from Rickettsia montanensis.